The following is a 539-amino-acid chain: Chaperonin GroEL (539 aa).

ATP-binding positions include 29 to 32 (TLGP), 86 to 90 (DGTTT), G413, 476 to 478 (NAA), and D492.

This sequence belongs to the chaperonin (HSP60) family. In terms of assembly, forms a cylinder of 14 subunits composed of two heptameric rings stacked back-to-back. Interacts with the co-chaperonin GroES.

Its subcellular location is the cytoplasm. The enzyme catalyses ATP + H2O + a folded polypeptide = ADP + phosphate + an unfolded polypeptide.. In terms of biological role, together with its co-chaperonin GroES, plays an essential role in assisting protein folding. The GroEL-GroES system forms a nano-cage that allows encapsulation of the non-native substrate proteins and provides a physical environment optimized to promote and accelerate protein folding. In Parageobacillus thermoglucosidasius (Geobacillus thermoglucosidasius), this protein is Chaperonin GroEL.